Here is a 365-residue protein sequence, read N- to C-terminus: Peptide chain release factor 2 (365 aa).

Gln252 carries the N5-methylglutamine modification.

This sequence belongs to the prokaryotic/mitochondrial release factor family. In terms of processing, methylated by PrmC. Methylation increases the termination efficiency of RF2.

Its subcellular location is the cytoplasm. In terms of biological role, peptide chain release factor 2 directs the termination of translation in response to the peptide chain termination codons UGA and UAA. This chain is Peptide chain release factor 2, found in Haemophilus ducreyi (strain 35000HP / ATCC 700724).